We begin with the raw amino-acid sequence, 324 residues long: o-succinylbenzoate synthase (324 aa).

The Proton donor role is filled by Lys-135. Positions 163, 192, and 215 each coordinate Mg(2+). Lys-237 (proton acceptor) is an active-site residue.

Belongs to the mandelate racemase/muconate lactonizing enzyme family. MenC type 1 subfamily. Requires a divalent metal cation as cofactor.

It carries out the reaction (1R,6R)-6-hydroxy-2-succinyl-cyclohexa-2,4-diene-1-carboxylate = 2-succinylbenzoate + H2O. The protein operates within quinol/quinone metabolism; 1,4-dihydroxy-2-naphthoate biosynthesis; 1,4-dihydroxy-2-naphthoate from chorismate: step 4/7. Its pathway is quinol/quinone metabolism; menaquinone biosynthesis. Functionally, converts 2-succinyl-6-hydroxy-2,4-cyclohexadiene-1-carboxylate (SHCHC) to 2-succinylbenzoate (OSB). This is o-succinylbenzoate synthase from Aliivibrio fischeri (strain ATCC 700601 / ES114) (Vibrio fischeri).